The chain runs to 87 residues: Small ribosomal subunit protein uS15 (87 aa).

It belongs to the universal ribosomal protein uS15 family. Part of the 30S ribosomal subunit. Forms a bridge to the 50S subunit in the 70S ribosome, contacting the 23S rRNA.

Its function is as follows. One of the primary rRNA binding proteins, it binds directly to 16S rRNA where it helps nucleate assembly of the platform of the 30S subunit by binding and bridging several RNA helices of the 16S rRNA. In terms of biological role, forms an intersubunit bridge (bridge B4) with the 23S rRNA of the 50S subunit in the ribosome. In Clostridium acetobutylicum (strain ATCC 824 / DSM 792 / JCM 1419 / IAM 19013 / LMG 5710 / NBRC 13948 / NRRL B-527 / VKM B-1787 / 2291 / W), this protein is Small ribosomal subunit protein uS15.